Consider the following 136-residue polypeptide: Glutamate-rich protein 4 (136 aa).

The interval 92 to 136 is disordered; it reads EEEEEEEQEEKSCVEENKGPEEKQDEERSRSSYPAQRLPDFGMTI. The span at 101–121 shows a compositional bias: basic and acidic residues; it reads EKSCVEENKGPEEKQDEERSR.

The chain is Glutamate-rich protein 4 (Erich4) from Mus musculus (Mouse).